We begin with the raw amino-acid sequence, 282 residues long: D-arabinitol 2-dehydrogenase [ribulose-forming] (282 aa).

Leucine 32 and asparagine 53 together coordinate NADP(+). Serine 170 acts as the Proton donor in catalysis. NADP(+) is bound by residues tyrosine 185, lysine 189, isoleucine 218, and threonine 220. Tyrosine 185 serves as the catalytic Proton acceptor. Lysine 189 (lowers pKa of active site Tyr) is an active-site residue.

This sequence belongs to the short-chain dehydrogenases/reductases (SDR) family.

The catalysed reaction is D-arabinitol + NAD(+) = D-ribulose + NADH + H(+). It participates in carbohydrate metabolism; D-arabinitol metabolism. Catalyzes the NAD(+)-dependent oxidation of D-arabinitol at carbon 4 to produce D-ribulose. The sequence is that of D-arabinitol 2-dehydrogenase [ribulose-forming] (ARD) from Candida tropicalis (Yeast).